We begin with the raw amino-acid sequence, 134 residues long: Small ribosomal subunit protein uS9 (134 aa).

Residues 98–114 (SKQELKSHGFLTRDPRK) show a composition bias toward basic and acidic residues. The disordered stretch occupies residues 98 to 134 (SKQELKSHGFLTRDPRKKERKKYGHKKARKSFQFSKR). The segment covering 115 to 134 (KERKKYGHKKARKSFQFSKR) has biased composition (basic residues).

It belongs to the universal ribosomal protein uS9 family.

This Chlamydia caviae (strain ATCC VR-813 / DSM 19441 / 03DC25 / GPIC) (Chlamydophila caviae) protein is Small ribosomal subunit protein uS9.